The chain runs to 339 residues: tRNA pseudouridine synthase B (339 aa).

Catalysis depends on D40, which acts as the Nucleophile. An RPE1 insert domain is found at 262–307 (FRRLSKFAYREEFEENTERSTAAYTLVREDANTGLTYKLPLEVELS).

Belongs to the pseudouridine synthase TruB family. Type 1 subfamily.

It catalyses the reaction uridine(55) in tRNA = pseudouridine(55) in tRNA. Responsible for synthesis of pseudouridine from uracil-55 in the psi GC loop of transfer RNAs. This chain is tRNA pseudouridine synthase B, found in Rickettsia felis (strain ATCC VR-1525 / URRWXCal2) (Rickettsia azadi).